A 419-amino-acid polypeptide reads, in one-letter code: Adenylosuccinate synthetase (419 aa).

Residues 11–17 (GDEGKGK) and 39–41 (GHS) each bind GTP. Asp12 acts as the Proton acceptor in catalysis. Mg(2+) is bound by residues Asp12 and Gly39. IMP is bound by residues 12 to 15 (DEGK), 37 to 40 (NAGH), Thr129, Arg143, Asn221, Thr236, and Arg296. His40 serves as the catalytic Proton donor. 292–298 (VSTGRKR) provides a ligand contact to substrate. Residues Arg298, 324-326 (KLD), and 408-410 (GTG) contribute to the GTP site.

The protein belongs to the adenylosuccinate synthetase family. In terms of assembly, homodimer. Mg(2+) is required as a cofactor.

Its subcellular location is the cytoplasm. It carries out the reaction IMP + L-aspartate + GTP = N(6)-(1,2-dicarboxyethyl)-AMP + GDP + phosphate + 2 H(+). It participates in purine metabolism; AMP biosynthesis via de novo pathway; AMP from IMP: step 1/2. Its function is as follows. Plays an important role in the de novo pathway and in the salvage pathway of purine nucleotide biosynthesis. Catalyzes the first committed step in the biosynthesis of AMP from IMP. The protein is Adenylosuccinate synthetase of Chaetomium globosum (strain ATCC 6205 / CBS 148.51 / DSM 1962 / NBRC 6347 / NRRL 1970) (Soil fungus).